The primary structure comprises 332 residues: Divalent cation transporter CmaX (332 aa).

Residues 1–277 (MQAYESGDER…MNRTMYLLGI (277 aa)) lie on the Cytoplasmic side of the membrane. Residues 278–286 (ITGFFLPMS) form a helical membrane-spanning segment. Topologically, residues 287–307 (FVTGLLGINVGGIPGADAPHG) are periplasmic. The chain crosses the membrane as a helical span at residues 308–323 (FWLACLLIGGVATFQW). Residues 324-332 (WVFRRLRWL) are Cytoplasmic-facing.

This sequence belongs to the CorA metal ion transporter (MIT) (TC 1.A.35) family. As to quaternary structure, homopentamer.

It is found in the cell inner membrane. It carries out the reaction Zn(2+)(in) = Zn(2+)(out). The enzyme catalyses Cd(2+)(in) = Cd(2+)(out). It catalyses the reaction Ni(2+)(in) = Ni(2+)(out). The catalysed reaction is Co(2+)(in) = Co(2+)(out). Its function is as follows. Transports divalent cations including Zn(2+), Cd(2+), Ni(2+) and Co(2+). The proton gradient has a small influence on transport suggesting that the transport is probably not proton-dependent. In Pseudomonas aeruginosa (strain ATCC 15692 / DSM 22644 / CIP 104116 / JCM 14847 / LMG 12228 / 1C / PRS 101 / PAO1), this protein is Divalent cation transporter CmaX.